Here is a 230-residue protein sequence, read N- to C-terminus: MRVPQTIAIDGQSAAGKSTLGALLAEALGYLYFDTGVMYRALALAALRAGIDPDDEAALSELAHQLVIDVTQPTVADGRQYTVLVNGEDVTWAIRSPEVERIVSRAARFPSVRREMVRQQQLIGQRGRVVMVGRDIGTVVMPNADLKIYLQASLAERARRRAAELRSRNIDMPLEQIAAALAERDALDAHVSQPAADAIILVNDGLTPAEEVALVLNRFVYSEQALENGH.

11–19 (GQSAAGKST) is a binding site for ATP.

This sequence belongs to the cytidylate kinase family. Type 1 subfamily.

The protein localises to the cytoplasm. It catalyses the reaction CMP + ATP = CDP + ADP. The enzyme catalyses dCMP + ATP = dCDP + ADP. The chain is Cytidylate kinase from Chloroflexus aggregans (strain MD-66 / DSM 9485).